The chain runs to 313 residues: Olfactory receptor 1J4 (313 aa).

Residues Met1–Ala25 are Extracellular-facing. Asn5 carries an N-linked (GlcNAc...) asparagine glycan. Residues Val26–Ile49 traverse the membrane as a helical segment. Residues Arg50 to Thr57 lie on the Cytoplasmic side of the membrane. Residues Pro58 to Pro79 traverse the membrane as a helical segment. Residues Lys80–Gln100 are Extracellular-facing. A disulfide bond links Cys97 and Cys189. A helical membrane pass occupies residues Met101–Tyr120. Residues Asp121–Gly139 lie on the Cytoplasmic side of the membrane. A helical transmembrane segment spans residues Leu140 to Ser158. The Extracellular segment spans residues His159–Asn195. Residues Glu196–Gly219 form a helical membrane-spanning segment. Over His220–Lys236 the chain is Cytoplasmic. The helical transmembrane segment at Ala237–Tyr259 threads the bilayer. At Phe260–Val272 the chain is on the extracellular side. Residues Ile273–Leu292 form a helical membrane-spanning segment. At Arg293–Gln313 the chain is on the cytoplasmic side.

This sequence belongs to the G-protein coupled receptor 1 family.

It localises to the cell membrane. Its function is as follows. Odorant receptor. This is Olfactory receptor 1J4 (OR1J4) from Homo sapiens (Human).